Here is a 522-residue protein sequence, read N- to C-terminus: ATP synthase subunit alpha (522 aa).

Gly176–Thr183 is an ATP binding site.

The protein belongs to the ATPase alpha/beta chains family. In terms of assembly, F-type ATPases have 2 components, CF(1) - the catalytic core - and CF(0) - the membrane proton channel. CF(1) has five subunits: alpha(3), beta(3), gamma(1), delta(1), epsilon(1). CF(0) has four main subunits: a, b, b' and c.

The protein localises to the cell membrane. The catalysed reaction is ATP + H2O + 4 H(+)(in) = ADP + phosphate + 5 H(+)(out). Functionally, produces ATP from ADP in the presence of a proton gradient across the membrane. The alpha chain is a regulatory subunit. In Chloroflexus aggregans (strain MD-66 / DSM 9485), this protein is ATP synthase subunit alpha.